Consider the following 108-residue polypeptide: Cytochrome c oxidase subunit 1 (108 aa).

A helical membrane pass occupies residues 10–30 (AFVAPVLGLLGFIPGGAGGIV). Residue histidine 49 coordinates heme a3. A run of 2 helical transmembrane segments spans residues 50 to 70 (FHLQ…YWLL) and 85 to 105 (LGLA…VGLH). Histidine 51 lines the Fe(II)-heme a pocket.

It belongs to the heme-copper respiratory oxidase family. Heme is required as a cofactor. It depends on Cu cation as a cofactor.

It is found in the cell membrane. The catalysed reaction is 4 Fe(II)-[cytochrome c] + O2 + 8 H(+)(in) = 4 Fe(III)-[cytochrome c] + 2 H2O + 4 H(+)(out). Its pathway is energy metabolism; oxidative phosphorylation. The sequence is that of Cytochrome c oxidase subunit 1 (cbaA) from Thermus thermophilus.